Consider the following 151-residue polypeptide: Chaperonin GroEL (151 aa).

41 to 45 (DGTTT) provides a ligand contact to ATP.

This sequence belongs to the chaperonin (HSP60) family. In terms of assembly, forms a cylinder of 14 subunits composed of two heptameric rings stacked back-to-back. Interacts with the co-chaperonin GroES.

Its subcellular location is the cytoplasm. The enzyme catalyses ATP + H2O + a folded polypeptide = ADP + phosphate + an unfolded polypeptide.. Its function is as follows. Together with its co-chaperonin GroES, plays an essential role in assisting protein folding. The GroEL-GroES system forms a nano-cage that allows encapsulation of the non-native substrate proteins and provides a physical environment optimized to promote and accelerate protein folding. The polypeptide is Chaperonin GroEL (Mycolicibacterium fortuitum (Mycobacterium fortuitum)).